A 339-amino-acid polypeptide reads, in one-letter code: Acyl-CoA dehydrogenase FadE28 (339 aa).

FAD is bound by residues R227, Q238, H295, and G299.

Belongs to the acyl-CoA dehydrogenase family. Heterotetramer composed of FadE28 and FadE29. It depends on FAD as a cofactor.

The enzyme catalyses 3-oxochol-4-en-22-oyl-CoA + A = 3-oxochola-4,17-dien-22-oyl-CoA + AH2. Its pathway is steroid metabolism; cholesterol degradation. Its function is as follows. Involved in the third cycle of side chain dehydrogenation in the beta-oxidation of cholesterol catabolism. May play an important role for the initial macrophage invasion, possibly in response to the acidification of phagosome. It contributes partly to the virulence by increasing the efficiency of beta-oxidation. Catalyzes the dehydrogenation of 2'-propanoyl-CoA ester side chains of 3-oxo-4-pregnene-20-carboxyl-CoA (3-OPC-CoA) to yield 3-oxo-4,17-pregnadiene-20-carboxyl-CoA (3-OPDC-CoA). Also able to dehydrogenate steroyl-CoA such as 3-oxo-chol-4-en-24-oyl-CoA (3-OCO-CoA), 1beta-(2'-propanoyl-CoA)-3a-alpha-H-7a-beta-methylhexahydro-4-indanone (indanone-CoA ester), hexahydroindanone and pregenenone. The sequence is that of Acyl-CoA dehydrogenase FadE28 (fadE28) from Mycobacterium tuberculosis (strain ATCC 25618 / H37Rv).